The primary structure comprises 122 residues: Large ribosomal subunit protein uL14c (122 aa).

This sequence belongs to the universal ribosomal protein uL14 family. Part of the 50S ribosomal subunit.

It localises to the plastid. The protein resides in the chloroplast. In terms of biological role, binds to 23S rRNA. This is Large ribosomal subunit protein uL14c from Huperzia lucidula (Shining clubmoss).